The following is a 395-amino-acid chain: Putative gustatory receptor 58a (395 aa).

Over 1–32 (MLLKFMYIYGIGCGLMPAPLKKGQFLLGYKQR) the chain is Cytoplasmic. Residues 33-53 (WYLIYTACLHGGLLTVLPFTF) traverse the membrane as a helical segment. The Extracellular portion of the chain corresponds to 54-72 (PHYMYDDSYMSSNPVLKWT). A helical transmembrane segment spans residues 73-93 (FNLTNITRIMAMFSGVLLMWF). Over 94 to 131 (RRKRILNLGENLILHCLKCKTLDNRSKKYSKLRKRVRN) the chain is Cytoplasmic. Residues 132 to 152 (VLFQMLLVANLSILLGALILF) traverse the membrane as a helical segment. Topologically, residues 153–169 (RIHSVQRISKTAMIVAH) are extracellular. A helical membrane pass occupies residues 170–190 (ITQFIYVVFMMTGICVILLVL). Residues 191–250 (HWQSERLQIALKDLCSFLNHEERNSLTLSENKANRSLGKLAKLFKLFAENQRLVREVFRT) lie on the Cytoplasmic side of the membrane. The helical transmembrane segment at 251-271 (FDLPIALLLLKMFVTNVNLVY) threads the bilayer. The Extracellular portion of the chain corresponds to 272 to 288 (HGVQFGNDTIETSSYTR). A glycan (N-linked (GlcNAc...) asparagine) is linked at asparagine 278. A helical transmembrane segment spans residues 289-309 (IVGQWVVISHYWSAVLLMNVV). Residues 310 to 366 (DDVTRRSDLKMGDLLREFSHLELVKRDFHLQLELFSDHLRCHPSTYKVCGLFIFNKQ) lie on the Cytoplasmic side of the membrane. The helical transmembrane segment at 367–387 (TSLAYFFYVLVQVLVLVQFDL) threads the bilayer. Residues 388-395 (KNKVEKRN) lie on the Extracellular side of the membrane.

This sequence belongs to the insect chemoreceptor superfamily. Gustatory receptor (GR) family. Gr22e subfamily. In terms of tissue distribution, expressed in the adult labellar chemosensory neurons.

The protein resides in the cell membrane. In terms of biological role, probable gustatory receptor which mediates acceptance or avoidance behavior, depending on its substrates. This chain is Putative gustatory receptor 58a (Gr58a), found in Drosophila melanogaster (Fruit fly).